A 464-amino-acid chain; its full sequence is Serine protease PepD (464 aa).

The interval 1–71 is disordered; sequence MAKLARVVGL…TQYRQPYEAL (71 aa). At 1–100 the chain is on the cytoplasmic side; sequence MAKLARVVGL…GMVRQRPRAG (100 aa). Residues 39–48 show a composition bias toward low complexity; that stretch reads QGQQQTYSQQ. A helical transmembrane segment spans residues 101-121; the sequence is MLAIGAVTIAVVSAGIGGAAA. Residues 122–464 are Periplasmic-facing; sequence SLVGFNRAPA…VQVTLGKAEQ (343 aa). Catalysis depends on charge relay system residues His197, Asp236, and Ser317. Residues 368–449 form the PDZ domain; sequence LISTGKASHA…TVALTFQDPS (82 aa).

The protein belongs to the peptidase S1C family. As to quaternary structure, homotrimer. Interacts with numerous proteins, including the 35 kDa antigen PspA.

It is found in the cell inner membrane. The protein localises to the secreted. Its subcellular location is the cell wall. The enzyme catalyses Acts on substrates that are at least partially unfolded. The cleavage site P1 residue is normally between a pair of hydrophobic residues, such as Val-|-Val.. Probably regulates its own activity by autocleavage, which removes the PDZ domain. Inhibited by the serine protease inhibitor diisopropylfluorophosphate (DFP). Inhibited by fluoroquinolone such as ciprofloxacin, moxifloxacin and ofloxacin and their analogs. Its function is as follows. Required for virulence. Acts both as a protease, which degrades and/or refolds damaged substrate targets, and as a chaperone. Plays an important role in the stress response network mediated through the two-component regulatory system MprAB and SigE signaling networks. May utilize its PDZ domain to recognize and process misfolded proteins at the cell membrane, leading to activation of the MprAB and SigE signaling pathways and subsequent establishment of a positive feedback loop that facilitates bacterial adaptation. Interacts with and potentially cleaves several proteins, including the 35 kDa antigen PspA. Proteolytic cleavage of PspA may help to maintain cell envelope homeostasis in Mycobacterium and regulate specific stress response pathways during periods of extracytoplasmic stress. In vitro, exhibits proteolytic activity against the artificial substrate beta-casein. The protein is Serine protease PepD of Mycobacterium tuberculosis (strain ATCC 25618 / H37Rv).